We begin with the raw amino-acid sequence, 313 residues long: Ribosomal RNA small subunit methyltransferase H (313 aa).

S-adenosyl-L-methionine-binding positions include 31 to 33, Asp-51, Phe-77, Asp-95, and Gln-102; that span reads GGH.

The protein belongs to the methyltransferase superfamily. RsmH family.

It localises to the cytoplasm. It catalyses the reaction cytidine(1402) in 16S rRNA + S-adenosyl-L-methionine = N(4)-methylcytidine(1402) in 16S rRNA + S-adenosyl-L-homocysteine + H(+). Its function is as follows. Specifically methylates the N4 position of cytidine in position 1402 (C1402) of 16S rRNA. This Xylella fastidiosa (strain M12) protein is Ribosomal RNA small subunit methyltransferase H.